The following is a 197-amino-acid chain: Transcription factor FapR (197 aa).

Belongs to the FapR family.

Its function is as follows. Transcriptional factor involved in regulation of membrane lipid biosynthesis by repressing genes involved in fatty acid and phospholipid metabolism. This chain is Transcription factor FapR, found in Bacillus anthracis (strain A0248).